A 143-amino-acid polypeptide reads, in one-letter code: Adrenodoxin, mitochondrial (143 aa).

The transit peptide at 1–19 (CSAVAVRTLRPLSLSARAA) directs the protein to the mitochondrion. One can recognise a 2Fe-2S ferredoxin-type domain in the interval 26-130 (ITVHFINRDG…NMTVRVPEAV (105 aa)). Residues Cys-65, Cys-71, Cys-74, and Cys-111 each contribute to the [2Fe-2S] cluster site.

Belongs to the adrenodoxin/putidaredoxin family. Requires [2Fe-2S] cluster as cofactor.

It localises to the mitochondrion matrix. Functionally, essential for the synthesis of various steroid hormones. Participates in the reduction of mitochondrial cytochrome P450 for steroidogenesis. Transfers electrons from adrenodoxin reductase to CYP11A1, a cytochrome P450 that catalyzes cholesterol side-chain cleavage. Does not form a ternary complex with adrenodoxin reductase and CYP11A1 but shuttles between the two enzymes to transfer electrons. This chain is Adrenodoxin, mitochondrial (FDX1), found in Gallus gallus (Chicken).